Consider the following 790-residue polypeptide: Type VI secretion system spike protein VgrG5 (790 aa).

Basic and acidic residues-rich tracts occupy residues 753-763 (GFRDYRAEMPQ) and 772-790 (AYRR…EPTP). The interval 753–790 (GFRDYRAEMPQHKPRSAPDAYRRDASRPGAADKDEPTP) is disordered.

The protein belongs to the VgrG protein family.

The protein localises to the secreted. Functionally, part of the H2 type VI secretion system (H2-T6SS) specialized secretion system, which delivers several virulence factors in both prokaryotic and eukaryotic cells during infection. Allows the delivery of the phospholipase effector PldB to target cells where it exerts its toxicity. Also plays a role in VgrG4b and its effector PldA secretion. This chain is Type VI secretion system spike protein VgrG5, found in Pseudomonas aeruginosa (strain ATCC 15692 / DSM 22644 / CIP 104116 / JCM 14847 / LMG 12228 / 1C / PRS 101 / PAO1).